The following is a 769-amino-acid chain: Serine/threonine-protein kinase PLK4 (769 aa).

Residues 14 to 267 (YEVQHLLGKG…LEAVLCHPFM (254 aa)) form the Protein kinase domain. Residues 20–28 (LGKGGFATV) and Lys-43 contribute to the ATP site. Asp-138 functions as the Proton acceptor in the catalytic mechanism. Positions 381 to 498 (EDRISVPPLN…ARFVGLVKSK (118 aa)) constitute a Cryptic POLO box 1 (CPB1) domain. A Cryptic POLO box 2 (CPB2) domain is found at 499 to 602 (TPKVTYFSTL…GRRPITDVQP (104 aa)). Positions 660 to 739 (PIKRINVPDI…IPNIQLKLKT (80 aa)) constitute a POLO box domain.

Belongs to the protein kinase superfamily. Ser/Thr protein kinase family. CDC5/Polo subfamily. Homodimer. In terms of processing, ubiquitinated by the SCF(Slimb) ubiquitin ligase complex; leading to its degradation by the proteasome during interphase and regulating centriole number and ensuring the block to centriole reduplication.

The protein localises to the cytoplasm. Its subcellular location is the cytoskeleton. It is found in the microtubule organizing center. The protein resides in the centrosome. It localises to the centriole. It carries out the reaction L-seryl-[protein] + ATP = O-phospho-L-seryl-[protein] + ADP + H(+). The enzyme catalyses L-threonyl-[protein] + ATP = O-phospho-L-threonyl-[protein] + ADP + H(+). Functionally, serine/threonine-protein kinase that plays a central role in centriole duplication. Able to trigger procentriole formation on the surface of the mother centriole cylinder, using mother centriole as a platform, leading to the recruitment of centriole biogenesis proteins such as sas-6. When overexpressed, it is able to induce centrosome amplification through the simultaneous generation of multiple procentrioles adjoining each parental centriole during S phase. Centrosome amplification following overexpression can initiate tumorigenesis, highlighting the importance of centrosome regulation in cancers. The protein is Serine/threonine-protein kinase PLK4 (SAK) of Drosophila simulans (Fruit fly).